The primary structure comprises 152 residues: MSSLAFNYIVNLLSRREYSEFELRNKMQEKNFSEEEIDEALSRCQAKNWQSDRRFSENYLNSRVQKGYGVGRIRQELRQLKGVSSDIIDEVLMESEIDWYEMAENLLRKKFPNYNEQQTPKMKQKIWQYMLSHGFRSDEFADLIGQNQSEWD.

It belongs to the RecX family.

It is found in the cytoplasm. Modulates RecA activity. The chain is Regulatory protein RecX from Haemophilus influenzae (strain PittEE).